We begin with the raw amino-acid sequence, 355 residues long: UDP-3-O-acylglucosamine N-acyltransferase (355 aa).

His246 serves as the catalytic Proton acceptor.

This sequence belongs to the transferase hexapeptide repeat family. LpxD subfamily. As to quaternary structure, homotrimer.

The enzyme catalyses a UDP-3-O-[(3R)-3-hydroxyacyl]-alpha-D-glucosamine + a (3R)-hydroxyacyl-[ACP] = a UDP-2-N,3-O-bis[(3R)-3-hydroxyacyl]-alpha-D-glucosamine + holo-[ACP] + H(+). The protein operates within bacterial outer membrane biogenesis; LPS lipid A biosynthesis. Functionally, catalyzes the N-acylation of UDP-3-O-acylglucosamine using 3-hydroxyacyl-ACP as the acyl donor. Is involved in the biosynthesis of lipid A, a phosphorylated glycolipid that anchors the lipopolysaccharide to the outer membrane of the cell. The sequence is that of UDP-3-O-acylglucosamine N-acyltransferase from Polaromonas naphthalenivorans (strain CJ2).